The following is a 381-amino-acid chain: tRNA pseudouridine synthase D (381 aa).

Aspartate 81 functions as the Nucleophile in the catalytic mechanism. Residues 160-335 (GMPNYFGSQR…TLGSRRFFWV (176 aa)) form the TRUD domain.

This sequence belongs to the pseudouridine synthase TruD family.

The catalysed reaction is uridine(13) in tRNA = pseudouridine(13) in tRNA. Functionally, responsible for synthesis of pseudouridine from uracil-13 in transfer RNAs. The polypeptide is tRNA pseudouridine synthase D (Helicobacter pylori (strain P12)).